A 386-amino-acid chain; its full sequence is Enamidase (386 aa).

The Zn(2+) site is built by H67, H69, and E164. Residues E164, H193, and H220 each contribute to the Fe cation site. D276 is a binding site for Zn(2+).

In terms of assembly, homotetramer. Dimer of dimers. Fe cation is required as a cofactor. The cofactor is Zn(2+).

It carries out the reaction 1,4,5,6-tetrahydro-6-oxonicotinate + 2 H2O = 2-formylglutarate + NH4(+). The protein operates within cofactor degradation; nicotinate degradation; propanoate and pyruvate from 6-hydroxynicotinate: step 2/8. Its function is as follows. Decyclization of 6-oxo-1,4,5,6-tetrahydronicotinate to form 2-(enamine)glutarate, followed by hydrolysis to form (S)-2-formylglutarate. This Eubacterium barkeri (Clostridium barkeri) protein is Enamidase.